A 234-amino-acid chain; its full sequence is 1-(5-phosphoribosyl)-5-[(5-phosphoribosylamino)methylideneamino] imidazole-4-carboxamide isomerase (234 aa).

Aspartate 9 functions as the Proton acceptor in the catalytic mechanism. Catalysis depends on aspartate 131, which acts as the Proton donor.

This sequence belongs to the HisA/HisF family.

Its subcellular location is the cytoplasm. The enzyme catalyses 1-(5-phospho-beta-D-ribosyl)-5-[(5-phospho-beta-D-ribosylamino)methylideneamino]imidazole-4-carboxamide = 5-[(5-phospho-1-deoxy-D-ribulos-1-ylimino)methylamino]-1-(5-phospho-beta-D-ribosyl)imidazole-4-carboxamide. It participates in amino-acid biosynthesis; L-histidine biosynthesis; L-histidine from 5-phospho-alpha-D-ribose 1-diphosphate: step 4/9. This chain is 1-(5-phosphoribosyl)-5-[(5-phosphoribosylamino)methylideneamino] imidazole-4-carboxamide isomerase, found in Staphylococcus saprophyticus subsp. saprophyticus (strain ATCC 15305 / DSM 20229 / NCIMB 8711 / NCTC 7292 / S-41).